The following is a 593-amino-acid chain: Dolichyl-phosphooligosaccharide-protein glycotransferase 2 (593 aa).

Over 1 to 12 (MTPVGMDRKSLS) the chain is Cytoplasmic. Residues 13 to 33 (LLILIVLLGLCIRLQNFGEIF) traverse the membrane as a helical segment. Residues 34-98 (DSRIYYYGYD…GLFLGFWASE (65 aa)) lie on the Extracellular side of the membrane. A DXD motif 1 motif is present at residues 41-43 (GYD). Residue D43 participates in Mn(2+) binding. Residues 99–119 (IFAVVFPVIIGVLCIVLVYLI) form a helical membrane-spanning segment. The Cytoplasmic segment spans residues 120–128 (SLEVLRNEK). A helical membrane pass occupies residues 129 to 149 (FALISAFIFSVCPVTVWKSLL). At 150-154 (GKADH) the chain is on the extracellular side. Residue D153 participates in Mn(2+) binding. The short motif at 153-155 (DHH) is the DXD motif 2 element. H154 is a binding site for a glycophospholipid. H155 serves as a coordination point for Mn(2+). The chain crosses the membrane as a helical span at residues 155 to 175 (HIWVVFLLLLSIWLVTKPGLL). At 176 to 180 (KLLSG) the chain is on the cytoplasmic side. The chain crosses the membrane as a helical span at residues 181-201 (IPMLLMALSWLGAPIYAALLA). Topologically, residues 202 to 229 (VSSLFQFNEKEVRIVGISNLIPVLSSIQ) are extracellular. The chain crosses the membrane as a helical span at residues 230–250 (NLFLGFSFLAIAVFLLVGSFV). Residues 251 to 265 (KRFERRFRYAIVYYL) lie on the Cytoplasmic side of the membrane. The helical transmembrane segment at 266-286 (CICSVALLSAYLMPVGWLGFV) threads the bilayer. At 287–310 (KSGISYVLGTDIYLPTIREARSFQ) the chain is on the extracellular side. The TIXE motif motif lies at 302–305 (TIRE). The chain crosses the membrane as a helical span at residues 311–331 (ILGVISSAGYLFFVLAIPALF). Position 332 (M332) is a topological domain, cytoplasmic. A helical membrane pass occupies residues 333-353 (LRNGFLKVFFVLSFLISILQL). R354 is a topological domain (extracellular). R354 is an a glycophospholipid binding site. The helical transmembrane segment at 355-375 (FVEVLAFPVAILASYTICQIL) threads the bilayer. Topologically, residues 376–411 (ERVDYPVFRKEEEGESKRRGRKEKKKAVEIRKKDHA) are cytoplasmic. The chain crosses the membrane as a helical span at residues 412-432 (TVIAFLLFLALPCFANSLAPV). Residues 433–593 (EMTMDWKEAL…FGTVKIFEVK (161 aa)) lie on the Extracellular side of the membrane. An interacts with target acceptor peptide in protein substrate region spans residues 468–470 (WWD). The WWDYG motif signature appears at 468–472 (WWDYG). The DKi motif signature appears at 524–539 (ELTVKPETNKTKFIPI).

It belongs to the STT3 family. Requires Mn(2+) as cofactor. It depends on Mg(2+) as a cofactor. Zn(2+) serves as cofactor.

Its subcellular location is the cell membrane. The enzyme catalyses an archaeal dolichyl phosphooligosaccharide + [protein]-L-asparagine = an archaeal dolichyl phosphate + a glycoprotein with the oligosaccharide chain attached by N-beta-D-glycosyl linkage to a protein L-asparagine.. The protein operates within protein modification; protein glycosylation. Functionally, oligosaccharyl transferase (OST) that catalyzes the initial transfer of a defined glycan (a GalNAc-linked heptasaccharide composed of 4 Hex, 3 dHex and a sulfate for A.fulgidus AglB-S) from the lipid carrier dolichol-monophosphate to an asparagine residue within an Asn-X-Ser/Thr consensus motif in nascent polypeptide chains, the first step in protein N-glycosylation. In Archaeoglobus fulgidus (strain ATCC 49558 / DSM 4304 / JCM 9628 / NBRC 100126 / VC-16), this protein is Dolichyl-phosphooligosaccharide-protein glycotransferase 2 (aglB2).